Reading from the N-terminus, the 519-residue chain is Cell division cycle protein 20 homolog B (519 aa).

A disordered region spans residues 77–106; it reads WQLSPARDPESSSSVEEGPPSHTPESLASG. The segment covering 87–96 has biased composition (low complexity); sequence SSSSVEEGPP. 6 WD repeats span residues 229 to 266, 271 to 310, 353 to 392, 399 to 441, 443 to 484, and 487 to 519; these read RNDY…WIEN, VCCH…QLRN, YHKE…GVQG, PQST…NIQT, STQS…RSGG, and GHRD…WKCC.

It belongs to the WD repeat CDC20/Fizzy family. In terms of tissue distribution, expressed in multiciliated cells (MCCs).

It is found in the cytoplasm. Functionally, protein regulator of centriole-deuterosome disengagement and subsequently participates in the ciliogenesis in multiciliated cells (MCCs). The protein is Cell division cycle protein 20 homolog B of Mus musculus (Mouse).